A 151-amino-acid polypeptide reads, in one-letter code: Putative pre-16S rRNA nuclease (151 aa).

Belongs to the YqgF nuclease family.

The protein resides in the cytoplasm. Could be a nuclease involved in processing of the 5'-end of pre-16S rRNA. This is Putative pre-16S rRNA nuclease from Thermosynechococcus vestitus (strain NIES-2133 / IAM M-273 / BP-1).